The following is a 492-amino-acid chain: N-succinylglutamate 5-semialdehyde dehydrogenase (492 aa).

Residue 220–225 participates in NAD(+) binding; sequence GSASTG. Active-site residues include Glu243 and Cys277.

Belongs to the aldehyde dehydrogenase family. AstD subfamily.

It carries out the reaction N-succinyl-L-glutamate 5-semialdehyde + NAD(+) + H2O = N-succinyl-L-glutamate + NADH + 2 H(+). It participates in amino-acid degradation; L-arginine degradation via AST pathway; L-glutamate and succinate from L-arginine: step 4/5. Its function is as follows. Catalyzes the NAD-dependent reduction of succinylglutamate semialdehyde into succinylglutamate. This is N-succinylglutamate 5-semialdehyde dehydrogenase from Salmonella paratyphi B (strain ATCC BAA-1250 / SPB7).